We begin with the raw amino-acid sequence, 429 residues long: Adenylosuccinate synthetase (429 aa).

Residues 12–18 (GDEGKGK) and 40–42 (GHT) each bind GTP. The active-site Proton acceptor is the Asp13. The Mg(2+) site is built by Asp13 and Gly40. IMP-binding positions include 13 to 16 (DEGK), 38 to 41 (NAGH), Thr129, Arg143, Gln223, Thr238, and Arg302. The Proton donor role is filled by His41. 298–304 (VVTGRKR) contributes to the substrate binding site. GTP is bound by residues Arg304, 330 to 332 (KLD), and 412 to 414 (STS).

It belongs to the adenylosuccinate synthetase family. Homodimer. The cofactor is Mg(2+).

The protein localises to the cytoplasm. It carries out the reaction IMP + L-aspartate + GTP = N(6)-(1,2-dicarboxyethyl)-AMP + GDP + phosphate + 2 H(+). The protein operates within purine metabolism; AMP biosynthesis via de novo pathway; AMP from IMP: step 1/2. In terms of biological role, plays an important role in the de novo pathway of purine nucleotide biosynthesis. Catalyzes the first committed step in the biosynthesis of AMP from IMP. The sequence is that of Adenylosuccinate synthetase from Bartonella tribocorum (strain CIP 105476 / IBS 506).